The primary structure comprises 540 residues: NEDD8-activating enzyme E1 regulatory subunit AXR1 (540 aa).

The protein belongs to the ubiquitin-activating E1 family. ULA1 subfamily. As to quaternary structure, heterodimer of ECR1 and AXR1. The complex binds to RUB1/NEDD8 and RCE1. In terms of tissue distribution, expressed in shoot, root and floral meristems, in vascular tissues of cotyledons and mature leaves, and in the stele of the root. Expressed at higher levels on the lower side of an emerging root during germination and at higher levels on the underside of the apical hook.

It localises to the nucleus. It participates in protein modification; protein neddylation. Functionally, regulatory subunit of the dimeric ECR1-AXR1 E1 enzyme. E1 activates RUB1/NEDD8 by first adenylating its C-terminal glycine residue with ATP, thereafter linking this residue to the side chain of the catalytic cysteine, yielding a RUB1-ECR1 thioester and free AMP. E1 finally transfers RUB1 to the catalytic cysteine of RCE1. Plays an important role in auxin response. Regulates the chromosomal localization of meiotic recombination by crossovers (COs) and subsequent synapsis, probably through the activation of a CRL4 complex. Required for E3-mediated protein degradation in response to auxin, jasmonic acid and cold stress. Required for the COP1-COP10-CSN-mediated repression of photomorphogenesis in the dark. May function redundantly with AXL1 in the RUB conjugating pathway. Seems not to be functionally equivalent to AXL1 in vivo. In Arabidopsis thaliana (Mouse-ear cress), this protein is NEDD8-activating enzyme E1 regulatory subunit AXR1.